The chain runs to 184 residues: MVELNPVTITNDNATPRGHVLKLILVESRDIIRAVKTRLCPQYTISYLAQAATVIAMLDTYSSKSELSKPDFFVALTVVNGRRYLREDLESNYLAGYVTGAPIKIEKLRSLLVSLDDSKDIIVSALEKAAKDAKRRLDMWIYDQSQLATGFRIHSFKGAMSSENPELFKKTAVPYLSSYGINEV.

Residue H154 coordinates substrate.

It belongs to the trichothecene O-acetyltransferase family.

It functions in the pathway mycotoxin biosynthesis. Its function is as follows. Trichothecene 15-O-acetyltransferase; part of the satratoxin SC2 cluster involved in the biosynthesis of satratoxins, trichothecene mycotoxins that are associated with human food poisonings. Satratoxins are suggested to be made by products of multiple gene clusters (SC1, SC2 and SC3) that encode 21 proteins in all, including polyketide synthases, acetyltransferases, and other enzymes expected to modify the trichothecene skeleton. SC1 encodes 10 proteins, SAT1 to SAT10. The largest are SAT8, which encodes a putative polyketide synthase (PKS) with a conventional non-reducing architecture, and SAT10, a putative protein containing four ankyrin repeats and thus may be involved in protein scaffolding. The putative short-chain reductase SAT3 may assist the PKS in some capacity. SAT6 contains a secretory lipase domain and acts probably as a trichothecene esterase. SAT5 encodes a putative acetyltransferase, and so, with SAT6, may affect endogenous protection from toxicity. The probable transcription factor SAT9 may regulate the expression of the SC1 cluster. SC2 encodes proteins SAT11 to SAT16, the largest of which encodes the putative reducing PKS SAT13. SAT11 is a cytochrome P450 monooxygenase, while SAT14 and SAT16 are probable acetyltransferases. The SC2 cluster may be regulated by the transcription factor SAT15. SC3 is a small cluster that encodes 5 proteins, SAT17 to SAT21. SAT21 is a putative MFS-type transporter which may have a role in exporting secondary metabolites. The four other proteins putatively encoded in SC3 include the taurine hydroxylase-like protein SAT17, the O-methyltransferase SAT18, the acetyltransferase SAT19, and the Cys6-type zinc finger SAT20, the latter being probably involved in regulation of SC3 expression. In Stachybotrys chartarum (strain CBS 109288 / IBT 7711) (Toxic black mold), this protein is Trichothecene 15-O-acetyltransferase SAT16.